Consider the following 89-residue polypeptide: Small ribosomal subunit protein bS18 (89 aa).

It belongs to the bacterial ribosomal protein bS18 family. As to quaternary structure, part of the 30S ribosomal subunit. Forms a tight heterodimer with protein bS6.

Functionally, binds as a heterodimer with protein bS6 to the central domain of the 16S rRNA, where it helps stabilize the platform of the 30S subunit. The protein is Small ribosomal subunit protein bS18 of Phocaeicola vulgatus (strain ATCC 8482 / DSM 1447 / JCM 5826 / CCUG 4940 / NBRC 14291 / NCTC 11154) (Bacteroides vulgatus).